The following is a 253-amino-acid chain: Sulfate transporter CysZ (253 aa).

Transmembrane regions (helical) follow at residues 31-51, 75-95, 151-171, and 222-242; these read FVILPLLVNILLMGGAFWWLF, LLWPLAVISVLLVFGYFFSTI, IVLLILYFIPGIGQTVAPVLW, and IPLLNLFIMPVAVCGATAMWV.

This sequence belongs to the CysZ family.

The protein localises to the cell inner membrane. High affinity, high specificity proton-dependent sulfate transporter, which mediates sulfate uptake. Provides the sulfur source for the cysteine synthesis pathway. In Shigella flexneri serotype 5b (strain 8401), this protein is Sulfate transporter CysZ.